Reading from the N-terminus, the 89-residue chain is Small ribosomal subunit protein bS18 (89 aa).

The span at 1 to 15 (MTTANTNETAAAAAA) shows a compositional bias: low complexity. The tract at residues 1–22 (MTTANTNETAAAAAAKNRRNKK) is disordered.

The protein belongs to the bacterial ribosomal protein bS18 family. As to quaternary structure, part of the 30S ribosomal subunit. Forms a tight heterodimer with protein bS6.

Functionally, binds as a heterodimer with protein bS6 to the central domain of the 16S rRNA, where it helps stabilize the platform of the 30S subunit. The polypeptide is Small ribosomal subunit protein bS18 (Caldanaerobacter subterraneus subsp. tengcongensis (strain DSM 15242 / JCM 11007 / NBRC 100824 / MB4) (Thermoanaerobacter tengcongensis)).